Here is a 284-residue protein sequence, read N- to C-terminus: MEEENLLNENLLHPNESSPEETQVTTVSKSKWTILVLAMILLLVYLTFGVCTYSFFRDQFSGTETNLFVDAFYFSIVTFSTVGYGDIVPSTSTTKILTIVLVSTGVVFLDYLLNRVVSHVLSLQENAILDRINKTRNRAIRDHIAEDGKIRLKWKLCLAFCAVGLCVGSGALFLHVFERLDWLDSVYLSVISVTTVGYGDKTFKTVEGRGFAVFWLLLSTIAMATLFLYLAEMRIDRTTVMKLPPSESEFIVFKLRESGRISEDDIKQIVREFENLEEVPSSGS.

The tract at residues 1–21 is disordered; it reads MEEENLLNENLLHPNESSPEE. Residues 1–31 lie on the Cytoplasmic side of the membrane; the sequence is MEEENLLNENLLHPNESSPEETQVTTVSKSK. Residues 32 to 52 traverse the membrane as a helical segment; that stretch reads WTILVLAMILLLVYLTFGVCT. The pore-forming intramembrane region spans 70–89; sequence DAFYFSIVTFSTVGYGDIVP. The chain crosses the membrane as a helical span at residues 93–113; it reads TTKILTIVLVSTGVVFLDYLL. Residues 114–156 lie on the Cytoplasmic side of the membrane; sequence NRVVSHVLSLQENAILDRINKTRNRAIRDHIAEDGKIRLKWKL. Residues 157–177 traverse the membrane as a helical segment; that stretch reads CLAFCAVGLCVGSGALFLHVF. The pore-forming intramembrane region spans 184–203; it reads DSVYLSVISVTTVGYGDKTF. Residues 211–231 form a helical membrane-spanning segment; that stretch reads FAVFWLLLSTIAMATLFLYLA. Topologically, residues 232–284 are cytoplasmic; that stretch reads EMRIDRTTVMKLPPSESEFIVFKLRESGRISEDDIKQIVREFENLEEVPSSGS.

This sequence belongs to the two pore domain potassium channel (TC 1.A.1.7) family. In terms of assembly, homodimer. As to expression, predominantly expressed in pollen.

The protein localises to the cell membrane. Its function is as follows. Voltage-independent, instantaneously activating, potassium-selective plasma membrane ion channel. Open rectifier. Regulated by cytoplasmic pH and extra-cellular calcium. Has some permeability for Rb(+) and NH(4)(+), but none for Na(+) or Li(+). The sequence is that of Two-pore potassium channel 4 (TPK4) from Arabidopsis thaliana (Mouse-ear cress).